Here is a 179-residue protein sequence, read N- to C-terminus: Translation initiation factor IF-3 (179 aa).

It belongs to the IF-3 family. As to quaternary structure, monomer.

The protein localises to the cytoplasm. Its function is as follows. IF-3 binds to the 30S ribosomal subunit and shifts the equilibrium between 70S ribosomes and their 50S and 30S subunits in favor of the free subunits, thus enhancing the availability of 30S subunits on which protein synthesis initiation begins. The polypeptide is Translation initiation factor IF-3 (Lactococcus lactis subsp. lactis (strain IL1403) (Streptococcus lactis)).